The primary structure comprises 205 residues: MKKIIICFIFVFSINVSFADATSELIDKIKNIHSMTANFNQKLIDGQTNNNLNSKGNMSLKKPQYFKWITTSPNNQEIVSNGTKLWIYDGDLDQLIIKKVSNDIAQFPYLILLSKNTNNINKLFTVTAQDNNSYILKPKNDQMIDSIKIKFTPNNQLEYLEISTSLNQFTKIEFNNVKTDVDISNTSFDFKAPQNTDIIDETKSA.

The N-terminal stretch at 1-19 (MKKIIICFIFVFSINVSFA) is a signal peptide.

It belongs to the LolA family. As to quaternary structure, monomer.

It is found in the periplasm. Its function is as follows. Participates in the translocation of lipoproteins from the inner membrane to the outer membrane. Only forms a complex with a lipoprotein if the residue after the N-terminal Cys is not an aspartate (The Asp acts as a targeting signal to indicate that the lipoprotein should stay in the inner membrane). The polypeptide is Outer-membrane lipoprotein carrier protein (Francisella tularensis subsp. holarctica (strain LVS)).